The sequence spans 141 residues: Alpha-lactalbumin (141 aa).

Residues 1–19 (MMSFVSLLVVGILFPAIQA) form the signal peptide. In terms of domain architecture, C-type lysozyme spans 20 to 141 (KQFTKCELSQ…KLDQWLCEKM (122 aa)). Intrachain disulfides connect Cys-25–Cys-138, Cys-47–Cys-129, Cys-80–Cys-95, and Cys-91–Cys-109. Lys-97, Asp-100, Asp-102, Asp-105, and Asp-106 together coordinate Ca(2+).

The protein belongs to the glycosyl hydrolase 22 family. Lactose synthase (LS) is a heterodimer of a catalytic component, beta1,4-galactosyltransferase (beta4Gal-T1) and a regulatory component, alpha-lactalbumin (LA). In terms of tissue distribution, mammary gland specific. Secreted in milk.

The protein localises to the secreted. Its function is as follows. Regulatory subunit of lactose synthase, changes the substrate specificity of galactosyltransferase in the mammary gland making glucose a good acceptor substrate for this enzyme. This enables LS to synthesize lactose, the major carbohydrate component of milk. In other tissues, galactosyltransferase transfers galactose onto the N-acetylglucosamine of the oligosaccharide chains in glycoproteins. This Sus scrofa (Pig) protein is Alpha-lactalbumin (LALBA).